Reading from the N-terminus, the 64-residue chain is Alpha-conotoxin Lt14.1 (64 aa).

A signal peptide spans 1–20; it reads MKLSVMFIVFLMLTMPMTCA. Positions 21 to 50 are excised as a propeptide; sequence GISRSATNGGEADVRAHDKAANLMALLQER. 2 disulfides stabilise this stretch: Cys52/Cys60 and Cys56/Cys63. Residue Cys63 is modified to Cysteine amide.

The protein belongs to the conotoxin L superfamily. In terms of processing, may contain a 4-hydroxyproline. Expressed by the venom duct.

Its subcellular location is the secreted. Functionally, alpha-conotoxins act on postsynaptic membranes, they bind to the nicotinic acetylcholine receptors (nAChR) and thus inhibit them. This synthetic peptide displays analgesic activity in a hot plate assay. Analgesia is also observed against second phase pain in formalin-induced inflammatory pain model, and in a rat model of mechanically-induced pain. Effects downstream of nAChR are inhibition of calcium influx, inhibition of ERK1/2 phosphorylation and inhibition of c-fos/NOS expression. Genes associated with drug dependence are not up-regulated by this toxin. Treatment with this toxin reversed morphine withdrawal symptoms in mice. In Conus litteratus (Lettered cone), this protein is Alpha-conotoxin Lt14.1.